We begin with the raw amino-acid sequence, 320 residues long: ATP-dependent 6-phosphofructokinase (320 aa).

G12 contributes to the ATP binding site. ADP-binding positions include 22–26 (RGVVR) and 55–60 (RYSVSD). ATP contacts are provided by residues 73-74 (RF) and 103-106 (GDGS). D104 serves as a coordination point for Mg(2+). 126 to 128 (TID) serves as a coordination point for substrate. Residue D128 is the Proton acceptor of the active site. An ADP-binding site is contributed by R155. Residues R163 and 170–172 (MGR) each bind substrate. Residues 186-188 (GCE), K212, and 214-216 (KKH) contribute to the ADP site. Residues E223, R244, and 250-253 (HIQR) contribute to the substrate site.

The protein belongs to the phosphofructokinase type A (PFKA) family. ATP-dependent PFK group I subfamily. Prokaryotic clade 'B1' sub-subfamily. In terms of assembly, homotetramer. It depends on Mg(2+) as a cofactor.

It is found in the cytoplasm. It catalyses the reaction beta-D-fructose 6-phosphate + ATP = beta-D-fructose 1,6-bisphosphate + ADP + H(+). It functions in the pathway carbohydrate degradation; glycolysis; D-glyceraldehyde 3-phosphate and glycerone phosphate from D-glucose: step 3/4. With respect to regulation, allosterically activated by ADP and other diphosphonucleosides, and allosterically inhibited by phosphoenolpyruvate. Its function is as follows. Catalyzes the phosphorylation of D-fructose 6-phosphate to fructose 1,6-bisphosphate by ATP, the first committing step of glycolysis. This is ATP-dependent 6-phosphofructokinase from Buchnera aphidicola subsp. Baizongia pistaciae (strain Bp).